A 249-amino-acid chain; its full sequence is RNA-free ribonuclease P (249 aa).

The disordered stretch occupies residues 226–249; the sequence is NENEPEYENRDKSKEGSSGEIEFI. Basic and acidic residues predominate over residues 232–242; that stretch reads YENRDKSKEGS.

The protein belongs to the HARP family.

The catalysed reaction is Endonucleolytic cleavage of RNA, removing 5'-extranucleotides from tRNA precursor.. In terms of biological role, RNA-free RNase P that catalyzes the removal of the 5'-leader sequence from pre-tRNA to produce the mature 5'-terminus. The polypeptide is RNA-free ribonuclease P (Methanosarcina barkeri (strain Fusaro / DSM 804)).